Here is a 32-residue protein sequence, read N- to C-terminus: Small ribosomal subunit protein uS19 (32 aa).

The protein belongs to the universal ribosomal protein uS19 family.

Its function is as follows. Protein S19 forms a complex with S13 that binds strongly to the 16S ribosomal RNA. The polypeptide is Small ribosomal subunit protein uS19 (rpsS) (Yersinia enterocolitica).